We begin with the raw amino-acid sequence, 373 residues long: MRRELFRKIKRVVVKIGSRVLTDDEGALDMGVIGRICGDIASLRRQGRQVVLVSSGAIAAGRSELGMTEKPRTIPHKQAAAAIGQTRMMRAYEESFAPHGLKVAQVLLTREDLASRQRFLNARATLDALLGFGVIPVINENDTVVVEEIKFGDNDNLSALVTNVAEAGLLVIMTDIEGFYSADPRSNPDAVLVPLVQGITREIERAAGGSGSSVGTGGMATKVAAAKKAAKNGVPTIIVPGKREGIIATLMAGQEVGTLFLPLDACLNRRKHWLAYSLKPAGRIIVDDGAREVLLKKGKSLLPSGVLRVEGRFERGACVRVCGSDEQEFARGLSDYSSSEIARLAGQRSSRIEAILGYRYGDVIIHRDNLVVL.

Lys-15 serves as a coordination point for ATP. Ser-55, Asp-142, and Asn-154 together coordinate substrate. ATP contacts are provided by residues 174 to 175 and 216 to 222; these read TD and TGGMATK. One can recognise a PUA domain in the interval 281 to 359; that stretch reads AGRIIVDDGA…SRIEAILGYR (79 aa).

The protein belongs to the glutamate 5-kinase family.

It localises to the cytoplasm. The catalysed reaction is L-glutamate + ATP = L-glutamyl 5-phosphate + ADP. It functions in the pathway amino-acid biosynthesis; L-proline biosynthesis; L-glutamate 5-semialdehyde from L-glutamate: step 1/2. Functionally, catalyzes the transfer of a phosphate group to glutamate to form L-glutamate 5-phosphate. In Pelobacter propionicus (strain DSM 2379 / NBRC 103807 / OttBd1), this protein is Glutamate 5-kinase.